The chain runs to 843 residues: MPLSYQHFRKLLLLDDEAGPLEEELPRLADEGLNHRVAEDLNLGNPNVDIPWTHKVGNFTGLYSSTVPVFNPEWQTPSFPDIHLQEDIVDRCEQFVGPLTVNERRRLKLVMPARFYPKVTKYLPLDKGIKPYYPEHVVNHYFQTRHYLHTLWKAGILYKRESTHSASFCGSPYSWEQDLQHGRLVIQTSKRHGDKSFCPQSPGILPRSSVGPCIQSQLRKSRLGPQPTQGQLAGRPQGGSGSIRARVHPSPWGTVGVEPSGSGHTHICASSSSSCLHQSAVRTAAYSLISTSKGHSSSGHAVELHHFPPNSSRSQSQGPVPSCWWLQFRNSKPCSEYCLCHIVNLIDDWGPCAEHGEHRIRTPRTPARVTGGVFLVDKNPHNTTESRLVVDFSQFSRGNTRVSWPKFAVPNLQSLTNLLSSNLSWLSLDVSAAFYHLPLHPAAMPHLLVGSSGLSRYVARLSSNSRIINHQHGTMQDLHNSCSRNLYVSLMLLYKTYGRKLHLYSHPIILGFRKIPMGVGLSPFLLAQFTSALCSVVRRAFPHCLAFSYMDDVVLGAKSVQHLESLYAAVTNFLLSLGXHLNPHKTKRWGYSLNFMGYVIGSWGTLPQEHIVQKIKLCFRKLPVNRPIDWKVCQRIVGLLGFAAPFTQCGYPALKPLYACIQAKQAFTFSPTYKAFLRQQYLNLYPVARQRPGLCQVFADATPTGWGLAIGHQRMRGTFVSPLPIHTAELLAACFARSRSGAKLIGTDNSVVLSRKYTSFPWLLGCAANWILRGTSFVYVPSALNPADDPSRGRLGLYRPLLRLPYRPTTGRTSLYAVSPSVPSHLPDRVHFASPLHVAWRPP.

Positions 1–177 (MPLSYQHFRK…FCGSPYSWEQ (177 aa)) are terminal protein domain (TP). The tract at residues 178 to 346 (DLQHGRLVIQ…YCLCHIVNLI (169 aa)) is spacer. 2 disordered regions span residues 219-258 (RKSRLGPQPTQGQLAGRPQGGSGSIRARVHPSPWGTVGVE) and 297-316 (SSGHAVELHHFPPNSSRSQS). A polymerase/reverse transcriptase domain (RT) region spans residues 347-690 (DDWGPCAEHG…YLNLYPVARQ (344 aa)). The 244-residue stretch at 357 to 600 (EHRIRTPRTP…YSLNFMGYVI (244 aa)) folds into the Reverse transcriptase domain. Residues Asp429, Asp551, and Asp552 each coordinate Mg(2+).

It belongs to the hepadnaviridae P protein family.

The enzyme catalyses DNA(n) + a 2'-deoxyribonucleoside 5'-triphosphate = DNA(n+1) + diphosphate. It catalyses the reaction Endonucleolytic cleavage to 5'-phosphomonoester.. Its activity is regulated as follows. Activated by host HSP70 and HSP40 in vitro to be able to bind the epsilon loop of the pgRNA. Because deletion of the RNase H region renders the protein partly chaperone-independent, the chaperones may be needed indirectly to relieve occlusion of the RNA-binding site by this domain. Inhibited by several reverse-transcriptase inhibitors: Lamivudine, Adefovir and Entecavir. Its function is as follows. Multifunctional enzyme that converts the viral RNA genome into dsDNA in viral cytoplasmic capsids. This enzyme displays a DNA polymerase activity that can copy either DNA or RNA templates, and a ribonuclease H (RNase H) activity that cleaves the RNA strand of RNA-DNA heteroduplexes in a partially processive 3'- to 5'-endonucleasic mode. Neo-synthesized pregenomic RNA (pgRNA) are encapsidated together with the P protein, and reverse-transcribed inside the nucleocapsid. Initiation of reverse-transcription occurs first by binding the epsilon loop on the pgRNA genome, and is initiated by protein priming, thereby the 5'-end of (-)DNA is covalently linked to P protein. Partial (+)DNA is synthesized from the (-)DNA template and generates the relaxed circular DNA (RC-DNA) genome. After budding and infection, the RC-DNA migrates in the nucleus, and is converted into a plasmid-like covalently closed circular DNA (cccDNA). The activity of P protein does not seem to be necessary for cccDNA generation, and is presumably released from (+)DNA by host nuclear DNA repair machinery. The chain is Protein P from Hepatitis B virus genotype B1 (isolate Japan/Ry30/2002) (HBV-B).